Here is a 205-residue protein sequence, read N- to C-terminus: Outer-membrane lipoprotein LolB (205 aa).

Residues 1–17 form the signal peptide; it reads MFLRHCITFTMIALLAG. A lipid anchor (N-palmitoyl cysteine) is attached at cysteine 18. Residue cysteine 18 is the site of S-diacylglycerol cysteine attachment.

Belongs to the LolB family. In terms of assembly, monomer.

It localises to the cell outer membrane. Its function is as follows. Plays a critical role in the incorporation of lipoproteins in the outer membrane after they are released by the LolA protein. The polypeptide is Outer-membrane lipoprotein LolB (Pseudomonas putida (strain ATCC 700007 / DSM 6899 / JCM 31910 / BCRC 17059 / LMG 24140 / F1)).